The following is a 157-amino-acid chain: Large ribosomal subunit protein eL24 (157 aa).

Residues 94–157 are disordered; that stretch reads RNQKPEVRKA…ISAPRVGGKR (64 aa). Residues 96 to 117 are compositionally biased toward basic and acidic residues; that stretch reads QKPEVRKAQREQAIRAAKESKK. A compositionally biased stretch (low complexity) spans 123–140; it reads KKPAAASAKTSAKTAQKP.

The protein belongs to the eukaryotic ribosomal protein eL24 family. Component of the large ribosomal subunit.

The protein localises to the cytoplasm. Its function is as follows. Component of the large ribosomal subunit. The ribosome is a large ribonucleoprotein complex responsible for the synthesis of proteins in the cell. The sequence is that of Large ribosomal subunit protein eL24 (rpl24) from Gillichthys mirabilis (Long-jawed mudsucker).